The sequence spans 499 residues: Glycerol kinase (499 aa).

Thr13 is a binding site for ADP. Thr13, Thr14, and Ser15 together coordinate ATP. Position 13 (Thr13) interacts with sn-glycerol 3-phosphate. An ADP-binding site is contributed by Arg17. Arg83, Glu84, Tyr135, and Asp245 together coordinate sn-glycerol 3-phosphate. Glycerol-binding residues include Arg83, Glu84, Tyr135, Asp245, and Gln246. 2 residues coordinate ADP: Thr267 and Gly310. ATP-binding residues include Thr267, Gly310, Gln314, and Gly411. Residues Gly411 and Asn415 each contribute to the ADP site.

It belongs to the FGGY kinase family. Homotetramer and homodimer (in equilibrium).

The catalysed reaction is glycerol + ATP = sn-glycerol 3-phosphate + ADP + H(+). It participates in polyol metabolism; glycerol degradation via glycerol kinase pathway; sn-glycerol 3-phosphate from glycerol: step 1/1. Activated by phosphorylation and inhibited by fructose 1,6-bisphosphate (FBP). Its function is as follows. Key enzyme in the regulation of glycerol uptake and metabolism. Catalyzes the phosphorylation of glycerol to yield sn-glycerol 3-phosphate. The sequence is that of Glycerol kinase from Halothermothrix orenii (strain H 168 / OCM 544 / DSM 9562).